The primary structure comprises 862 residues: Linoleate 9S-lipoxygenase 1 (862 aa).

Positions 44-171 (FGAATDIVGG…SYKRDRIFFA (128 aa)) constitute a PLAT domain. Positions 174–862 (TYLPNETPAS…FRGIPNSISI (689 aa)) constitute a Lipoxygenase domain. A disordered region spans residues 225–257 (KNLARTTLGGSSDFPYPRRGRTGRKSTRKDPKC). A compositionally biased stretch (basic residues) spans 242–251 (RRGRTGRKST). Residues His-522, His-527, His-713, Asn-717, and Ile-862 each contribute to the Fe cation site.

This sequence belongs to the lipoxygenase family. Monomer. Fe cation is required as a cofactor.

Its subcellular location is the cytoplasm. The enzyme catalyses (9Z,12Z)-octadecadienoate + O2 = (13S)-hydroperoxy-(9Z,11E)-octadecadienoate. The catalysed reaction is (9Z,12Z,15Z)-octadecatrienoate + O2 = (13S)-hydroperoxy-(9Z,11E,15Z)-octadecatrienoate. It carries out the reaction (9Z,12Z)-octadecadienoate + O2 = (9S)-hydroperoxy-(10E,12Z)-octadecadienoate. It participates in lipid metabolism; oxylipin biosynthesis. Functionally, plant lipoxygenase may be involved in a number of diverse aspects of plant physiology including growth and development, pest resistance, and senescence or responses to wounding. It catalyzes the hydroperoxidation of lipids containing a cis,cis-1,4-pentadiene structure. In Phaseolus vulgaris (Kidney bean), this protein is Linoleate 9S-lipoxygenase 1 (LOXA).